The primary structure comprises 321 residues: Cytochrome c biogenesis protein CcsA (321 aa).

Transmembrane regions (helical) follow at residues 9-29 (ILTHISFSTISIVITIHLITL), 44-64 (GMIATFFSITGFLVSRWVSSG), 68-88 (LSNLYESLIFLSWTLYILHTI), 143-163 (MLLSYATLLCGSLLSAALLII), 225-245 (VISLGFTLLTVGILCGAVWAN), 259-273 (TWAFITWTIFAIYLH), and 288-308 (VASIGFLIIWICYFGINLLGI).

The protein belongs to the CcmF/CycK/Ccl1/NrfE/CcsA family. May interact with Ccs1.

Its subcellular location is the plastid. The protein resides in the chloroplast thylakoid membrane. In terms of biological role, required during biogenesis of c-type cytochromes (cytochrome c6 and cytochrome f) at the step of heme attachment. This Saccharum hybrid (Sugarcane) protein is Cytochrome c biogenesis protein CcsA.